Reading from the N-terminus, the 337-residue chain is Glucokinase (337 aa).

11–16 (ADIGGT) lines the ATP pocket.

Belongs to the bacterial glucokinase family.

The protein resides in the cytoplasm. The catalysed reaction is D-glucose + ATP = D-glucose 6-phosphate + ADP + H(+). This is Glucokinase from Xylella fastidiosa (strain 9a5c).